A 429-amino-acid chain; its full sequence is Acetylornithine aminotransferase (429 aa).

Residues 126 to 127 (GA) and phenylalanine 160 each bind pyridoxal 5'-phosphate. Residue arginine 163 coordinates N(2)-acetyl-L-ornithine. 251-254 (DEVQ) is a pyridoxal 5'-phosphate binding site. Lysine 280 bears the N6-(pyridoxal phosphate)lysine mark. Residue serine 307 coordinates N(2)-acetyl-L-ornithine. Residue threonine 308 participates in pyridoxal 5'-phosphate binding.

This sequence belongs to the class-III pyridoxal-phosphate-dependent aminotransferase family. ArgD subfamily. As to quaternary structure, homodimer. The cofactor is pyridoxal 5'-phosphate.

The protein resides in the cytoplasm. The enzyme catalyses N(2)-acetyl-L-ornithine + 2-oxoglutarate = N-acetyl-L-glutamate 5-semialdehyde + L-glutamate. Its pathway is amino-acid biosynthesis; L-arginine biosynthesis; N(2)-acetyl-L-ornithine from L-glutamate: step 4/4. Its activity is regulated as follows. N-acetylornithine aminotransferase activity is stimulated by the addition of Mg(2+), Ca(2+) or Mn(2+), and inhibited by the addition of Zn(2+), Cu(2+), Co(2+) or Ni(2+). Functionally, catalyzes the reversible conversion of N-acetylornithine to N-acetylglutamate-5-semialdehyde. In vitro, also shows very low ornithine aminotransferase (OAT) and gamma-aminobutyrate aminotransferase (GABA-AT) activity, catalyzing the conversion of ornithine (Orn) to glutamate-5-semialdehyde and of gamma-aminobutyric acid (GABA) to succinate semialdehyde. It has been shown to function as a GABA-AT and contributes to closing the tricarboxylic acid cycle of Synechocystis sp. PCC6803 via the GABA shunt. However, the catalytic efficiency toward N-acetylornithine is 2500-fold and 10700-fold higher than that toward ornithine and gamma-aminobutyrate, respectively, indicating that the protein mainly functions as an N-acetylornithine aminotransferase. The chain is Acetylornithine aminotransferase from Synechocystis sp. (strain ATCC 27184 / PCC 6803 / Kazusa).